Here is a 508-residue protein sequence, read N- to C-terminus: MSRPGPSAPRQLTLTEELEKLEQQITLTLQEIDSNFAKAHRIVTTSILPLVEQYGEHSRAVWEATKFWKQFFEASANVSLSGYEELVDGGETSPAEETAHDQEEEQTTAIHDHTQEPSQYTPRPQTSAGGHDTTTLSSVDDQSSVLYDRSRAAQQQPAQLQHHDDSSVLTDRDGDLAGSTPHAPPRGIKIEQQQQPQPAGDEMDIDMDEEDSELIFQQHTTRLLGETSRYYDDDHGFEQGEEEEDEEEEEEEEEEEEGGGGGEVGDDSVLGARSRSKNPVLHRMQNKTYRIMATPHKGISAVKPNTTSNRGVSPVRWKIQPTTPKIKQEDTEKKRPLWEDSPSSSPEPAPPQLRSAAFMSPMRLAYGGPKTSEKLQAAAKAIAAPRTPGVSVQTPAVGRKTKDVFGGVGMQSATKAIVDAKAAAKEKRKSILEEITWESDEDLGVSPPKTIQFAVPASRLMQTPAREASRRIVDDLLLTAGGGDLIEGSSEYSPSVVKMNQDIMDESF.

Disordered stretches follow at residues 86–138 (LVDG…TLSS) and 150–355 (SRAA…QLRS). Residues 116–138 (EPSQYTPRPQTSAGGHDTTTLSS) show a composition bias toward polar residues. Over residues 161-175 (QHHDDSSVLTDRDGD) the composition is skewed to basic and acidic residues. The segment covering 201 to 213 (DEMDIDMDEEDSE) has biased composition (acidic residues). Basic and acidic residues predominate over residues 229 to 238 (RYYDDDHGFE). Positions 239–258 (QGEEEEDEEEEEEEEEEEEG) are enriched in acidic residues. The segment covering 326-338 (IKQEDTEKKRPLW) has biased composition (basic and acidic residues).

This sequence belongs to the DASH complex ASK1 family. As to quaternary structure, component of the DASH complex consisting of ASK1, DAD1, DAD2, DAD3, DAD4, DAM1, DUO1, HSK3, SPC19 and SPC34, with a stoichiometry of one copy of each subunit per complex. Multiple DASH complexes oligomerize to form a ring that encircles spindle microtubules and organizes the rod-like NDC80 complexes of the outer kinetochore. On cytoplasmic microtubules, DASH complexes appear to form patches instead of rings.

It is found in the chromosome. The protein resides in the centromere. Its subcellular location is the kinetochore. The protein localises to the cytoplasm. It localises to the cytoskeleton. It is found in the spindle. The protein resides in the nucleus. Component of the DASH complex that connects microtubules with kinetochores and couples microtubule depolymerisation to chromosome movement; it is involved in retrieving kinetochores to the spindle poles before their re-orientation on the spindle in early mitosis and allows microtubule depolymerization to pull chromosomes apart and resist detachment during anaphase. Kinetochores, consisting of a centromere-associated inner segment and a microtubule-contacting outer segment, play a crucial role in chromosome segregation by mediating the physical connection between centromeric DNA and microtubules. Kinetochores also serve as an input point for the spindle assembly checkpoint, which delays anaphase until all chromosomes have bioriented on the mitotic spindle. The sequence is that of DASH complex subunit ASK1 from Chaetomium thermophilum (strain DSM 1495 / CBS 144.50 / IMI 039719) (Thermochaetoides thermophila).